The chain runs to 150 residues: Ribonuclease H (150 aa).

One can recognise an RNase H type-1 domain in the interval 2 to 143; that stretch reads PAPILDIFVD…ADELANRAIE (142 aa). Positions 11, 49, 71, and 135 each coordinate Mg(2+).

The protein belongs to the RNase H family. As to quaternary structure, monomer. Requires Mg(2+) as cofactor.

The protein localises to the cytoplasm. The enzyme catalyses Endonucleolytic cleavage to 5'-phosphomonoester.. Endonuclease that specifically degrades the RNA of RNA-DNA hybrids. In Dichelobacter nodosus (strain VCS1703A), this protein is Ribonuclease H.